The primary structure comprises 285 residues: Dermonecrotic toxin LlSicTox-alphaIII2 (285 aa).

His12 is a catalytic residue. Residues Glu32 and Asp34 each coordinate Mg(2+). The active-site Nucleophile is His47. A disulfide bond links Cys51 and Cys57. Residue Asp91 coordinates Mg(2+).

This sequence belongs to the arthropod phospholipase D family. Class I subfamily. Requires Mg(2+) as cofactor. In terms of tissue distribution, expressed by the venom gland.

The protein localises to the secreted. The catalysed reaction is an N-(acyl)-sphingosylphosphocholine = an N-(acyl)-sphingosyl-1,3-cyclic phosphate + choline. It carries out the reaction an N-(acyl)-sphingosylphosphoethanolamine = an N-(acyl)-sphingosyl-1,3-cyclic phosphate + ethanolamine. It catalyses the reaction a 1-acyl-sn-glycero-3-phosphocholine = a 1-acyl-sn-glycero-2,3-cyclic phosphate + choline. The enzyme catalyses a 1-acyl-sn-glycero-3-phosphoethanolamine = a 1-acyl-sn-glycero-2,3-cyclic phosphate + ethanolamine. Functionally, dermonecrotic toxins cleave the phosphodiester linkage between the phosphate and headgroup of certain phospholipids (sphingolipid and lysolipid substrates), forming an alcohol (often choline) and a cyclic phosphate. This toxin acts on sphingomyelin (SM) (228.2 U/mg). It may also act on ceramide phosphoethanolamine (CPE), lysophosphatidylcholine (LPC) and lysophosphatidylethanolamine (LPE), but not on lysophosphatidylserine (LPS), and lysophosphatidylglycerol (LPG). It acts by transphosphatidylation, releasing exclusively cyclic phosphate products as second products. Induces dermonecrosis, hemolysis, increased vascular permeability, edema, inflammatory response, and platelet aggregation. Is lethal to mice. In Loxosceles laeta (South American recluse spider), this protein is Dermonecrotic toxin LlSicTox-alphaIII2.